Consider the following 262-residue polypeptide: UPF0619 GPI-anchored membrane protein C1322.10 (262 aa).

An N-terminal signal peptide occupies residues 1-20; it reads MLARVGTTLFFLANALAAYA. 2 disordered regions span residues 136 to 165 and 175 to 194; these read STSA…SSST and ISSS…SGSI. N-linked (GlcNAc...) asparagine glycosylation is found at Asn207 and Asn227. Asn242 carries GPI-like-anchor amidated asparagine lipidation. A propeptide spans 243–262 (removed in mature form); it reads GVAQLSVAACMGIAALMLIA.

The protein belongs to the UPF0619 family.

The protein resides in the golgi apparatus membrane. The protein localises to the cell membrane. This chain is UPF0619 GPI-anchored membrane protein C1322.10, found in Schizosaccharomyces pombe (strain 972 / ATCC 24843) (Fission yeast).